A 758-amino-acid polypeptide reads, in one-letter code: Glucan endo-1,3-beta-D-glucosidase (758 aa).

The tat-type signal signal peptide spans 1 to 34 (MSHASRRRWRRATTSAATAALLCGALLTFPSAPA). Residues 38–251 (VRLGSGSYTT…SGYASVALLP (214 aa)) are beta-sandwich subdomain. The 667-residue stretch at 38 to 704 (VRLGSGSYTT…QWLSTLAEFG (667 aa)) folds into the GH81 domain. Positions 252-342 (SPDDFDRYAP…EGDRFTTELT (91 aa)) are alpha/beta subdomain. The (alpha/beta)6 barrel subdomain stretch occupies residues 352-704 (TVDSADHQRL…QWLSTLAEFG (353 aa)). (1,3-beta-D-glucosyl)n contacts are provided by Tyr382, Lys386, Asp457, His461, Asn532, Glu534, and Glu538. Residue Asp457 is part of the active site. Active-site residues include Glu534 and Glu538.

This sequence belongs to the glycosyl hydrolase 81 family. In terms of processing, predicted to be exported by the Tat system. The position of the signal peptide cleavage has not been experimentally proven.

It localises to the secreted. The enzyme catalyses Hydrolysis of (1-&gt;3)-beta-D-glucosidic linkages in (1-&gt;3)-beta-D-glucans.. Functionally, cleaves internal linkages in 1,3-beta-glucan. May contribute to biomass degradation by hydrolyzing the 1,3-beta-linked plant polymer callose that is present in decomposing plant tissue. The chain is Glucan endo-1,3-beta-D-glucosidase from Thermobifida fusca (strain YX).